Here is a 518-residue protein sequence, read N- to C-terminus: Suppressor of hairless homolog (518 aa).

A disordered region spans residues 22–59 (ETDQQRSHVKERVNGTPNQNGGTSTSSKPRSVFENRPP). The segment covering 24–34 (DQQRSHVKERV) has biased composition (basic and acidic residues). A compositionally biased stretch (polar residues) spans 36–50 (GTPNQNGGTSTSSKP). 3 DNA-binding regions span residues 89–96 (KSYGNEKR), 223–232 (RLRSQTVSTR), and 296–328 (RKVD…ERMY). The IPT/TIG domain maps to 386-476 (PVVHSLQLNG…YPTNLTFTFT (91 aa)).

Belongs to the Su(H) family. As to quaternary structure, interacts with activated Notch proteins.

It localises to the nucleus. Functionally, transcriptional regulator that plays a central role in Notch signaling, a signaling pathway involved in cell-cell communication that regulates a broad spectrum of cell-fate determinations. Acts as a transcriptional repressor when it is not associated with Notch proteins. When associated with some Notch protein, it acts as a transcriptional activator that activates transcription of Notch target genes. This Halocynthia roretzi (Sea squirt) protein is Suppressor of hairless homolog (RBP-JK).